The sequence spans 66 residues: Cell division protein FtsB (66 aa).

Topologically, residues 1-3 (MKM) are cytoplasmic. Residues 4-21 (LKIFLLFLLFWLQCSLWI) form a helical membrane-spanning segment. Residues 22–66 (GKNGILDYIKIYKKIIVQKKKNEDFQIRNNQLILEIERLNNAIKN) are Extracellular-facing. Residues 38 to 66 (VQKKKNEDFQIRNNQLILEIERLNNAIKN) adopt a coiled-coil conformation.

The protein belongs to the FtsB family.

It localises to the cell membrane. Its function is as follows. Essential cell division protein. May link together the upstream cell division proteins, which are predominantly cytoplasmic, with the downstream cell division proteins, which are predominantly extracellular. The polypeptide is Cell division protein FtsB (Buchnera aphidicola subsp. Schizaphis graminum (strain Sg)).